The primary structure comprises 310 residues: Acetylglutamate kinase (310 aa).

Substrate is bound by residues 76 to 77 (GG), arginine 98, and asparagine 203.

The protein belongs to the acetylglutamate kinase family. ArgB subfamily.

It is found in the cytoplasm. The catalysed reaction is N-acetyl-L-glutamate + ATP = N-acetyl-L-glutamyl 5-phosphate + ADP. It participates in amino-acid biosynthesis; L-arginine biosynthesis; N(2)-acetyl-L-ornithine from L-glutamate: step 2/4. Functionally, catalyzes the ATP-dependent phosphorylation of N-acetyl-L-glutamate. The protein is Acetylglutamate kinase of Cutibacterium acnes (strain DSM 16379 / KPA171202) (Propionibacterium acnes).